We begin with the raw amino-acid sequence, 146 residues long: Hemoglobin subunit beta (146 aa).

Val1 bears the N-acetylvaline mark. Residues 2-146 (HLTPEEKALV…VANALAHKYH (145 aa)) form the Globin domain. At Lys59 the chain carries N6-acetyllysine. His63 contacts heme b. Lys82 is subject to N6-acetyllysine. His92 contacts heme b. An S-nitrosocysteine modification is found at Cys93. An N6-acetyllysine modification is found at Lys144.

This sequence belongs to the globin family. Heterotetramer of two alpha chains and two beta chains. In terms of tissue distribution, red blood cells.

Its function is as follows. Involved in oxygen transport from the lung to the various peripheral tissues. The protein is Hemoglobin subunit beta (HBB) of Trichechus inunguis (Amazon manatee).